A 260-amino-acid chain; its full sequence is Thiazole synthase (260 aa).

Lys-101 acts as the Schiff-base intermediate with DXP in catalysis. Residues Gly-162, 188–189 (AG), and 210–211 (NT) each bind 1-deoxy-D-xylulose 5-phosphate.

It belongs to the ThiG family. In terms of assembly, homotetramer. Forms heterodimers with either ThiH or ThiS.

Its subcellular location is the cytoplasm. The enzyme catalyses [ThiS sulfur-carrier protein]-C-terminal-Gly-aminoethanethioate + 2-iminoacetate + 1-deoxy-D-xylulose 5-phosphate = [ThiS sulfur-carrier protein]-C-terminal Gly-Gly + 2-[(2R,5Z)-2-carboxy-4-methylthiazol-5(2H)-ylidene]ethyl phosphate + 2 H2O + H(+). It functions in the pathway cofactor biosynthesis; thiamine diphosphate biosynthesis. Its function is as follows. Catalyzes the rearrangement of 1-deoxy-D-xylulose 5-phosphate (DXP) to produce the thiazole phosphate moiety of thiamine. Sulfur is provided by the thiocarboxylate moiety of the carrier protein ThiS. In vitro, sulfur can be provided by H(2)S. The chain is Thiazole synthase from Acidithiobacillus ferrooxidans (strain ATCC 23270 / DSM 14882 / CIP 104768 / NCIMB 8455) (Ferrobacillus ferrooxidans (strain ATCC 23270)).